A 275-amino-acid polypeptide reads, in one-letter code: Large ribosomal subunit protein uL2 (275 aa).

A compositionally biased stretch (basic and acidic residues) spans 28–38 (RPYDGLLEKKS). Disordered stretches follow at residues 28-58 (RPYDGLLEKKSKSGGRNNNGRITTRHVGGGH) and 223-275 (VAMN…RKAK). Basic residues predominate over residues 254–275 (KGHKTRKNKRTDKLIVRRRKAK).

This sequence belongs to the universal ribosomal protein uL2 family. In terms of assembly, part of the 50S ribosomal subunit. Forms a bridge to the 30S subunit in the 70S ribosome.

In terms of biological role, one of the primary rRNA binding proteins. Required for association of the 30S and 50S subunits to form the 70S ribosome, for tRNA binding and peptide bond formation. It has been suggested to have peptidyltransferase activity; this is somewhat controversial. Makes several contacts with the 16S rRNA in the 70S ribosome. This is Large ribosomal subunit protein uL2 from Chromohalobacter salexigens (strain ATCC BAA-138 / DSM 3043 / CIP 106854 / NCIMB 13768 / 1H11).